We begin with the raw amino-acid sequence, 513 residues long: Activin receptor type-2A (513 aa).

An N-terminal signal peptide occupies residues 1–19; it reads MGAATKLAFAVFLISCSSG. At 20–139 the chain is on the extracellular side; the sequence is AILGRSETQE…VTPKPPLFNT (120 aa). 5 disulfide bridges follow: C30–C60, C50–C78, C85–C104, C91–C103, and C105–C110. Residues N43 and N66 are each glycosylated (N-linked (GlcNAc...) asparagine). Residues 140–160 traverse the membrane as a helical segment; that stretch reads LLYSLVPIMGIAVIVLFSFWM. The Cytoplasmic segment spans residues 161–513; sequence YRHHKLAYPP…VDFPPKESSL (353 aa). Residues 192–485 form the Protein kinase domain; it reads LQLLEIKARG…EERIIQMQKL (294 aa). ATP contacts are provided by residues 198-206 and K219; that span reads KARGRFGCV. The Proton acceptor role is filled by D322.

Belongs to the protein kinase superfamily. TKL Ser/Thr protein kinase family. TGFB receptor subfamily. Mg(2+) serves as cofactor. Requires Mn(2+) as cofactor. As to expression, expressed in hen anterior pituitary during the ovulatory cycle and in the ovarian follicle.

It is found in the cell membrane. The catalysed reaction is L-threonyl-[receptor-protein] + ATP = O-phospho-L-threonyl-[receptor-protein] + ADP + H(+). It carries out the reaction L-seryl-[receptor-protein] + ATP = O-phospho-L-seryl-[receptor-protein] + ADP + H(+). On ligand binding, forms a receptor complex consisting of two type II and two type I transmembrane serine/threonine kinases. Type II receptors phosphorylate and activate type I receptors which autophosphorylate, then bind and activate SMAD transcriptional regulators. Receptor for activin A, activin B and inhibin A. May modulate neuropeptide expression in dorsal root ganglia (DRG) neurons and ovarian follicle development. The chain is Activin receptor type-2A (ACVR2A) from Gallus gallus (Chicken).